The following is a 252-amino-acid chain: Probable transcriptional regulatory protein all4276 (252 aa).

It belongs to the TACO1 family.

The protein localises to the cytoplasm. The protein is Probable transcriptional regulatory protein all4276 of Nostoc sp. (strain PCC 7120 / SAG 25.82 / UTEX 2576).